Reading from the N-terminus, the 421-residue chain is UDP-N-acetylglucosamine 1-carboxyvinyltransferase (421 aa).

Residue 23–24 (KN) coordinates phosphoenolpyruvate. Residue Arg-92 participates in UDP-N-acetyl-alpha-D-glucosamine binding. The active-site Proton donor is the Cys-116. Cys-116 is subject to 2-(S-cysteinyl)pyruvic acid O-phosphothioketal. Residues 121–125 (RPVDL), 161–164 (KVSV), Asp-306, and Ile-328 each bind UDP-N-acetyl-alpha-D-glucosamine.

This sequence belongs to the EPSP synthase family. MurA subfamily.

It is found in the cytoplasm. The catalysed reaction is phosphoenolpyruvate + UDP-N-acetyl-alpha-D-glucosamine = UDP-N-acetyl-3-O-(1-carboxyvinyl)-alpha-D-glucosamine + phosphate. The protein operates within cell wall biogenesis; peptidoglycan biosynthesis. In terms of biological role, cell wall formation. Adds enolpyruvyl to UDP-N-acetylglucosamine. This chain is UDP-N-acetylglucosamine 1-carboxyvinyltransferase, found in Vibrio campbellii (strain ATCC BAA-1116).